A 345-amino-acid chain; its full sequence is MSTSKRKIDHLKICLEEEVESGYTGLEDVMLIHKALPEVDYWKIDTEIEFFGKKLSFPLLIASMTGGHPETKEINARLGEAVEEAGIGMGVGSQRAAIEDESLADSFTVVREKAPNAFVYANIGMPQVIERGVEIVDRAVEMIDADAVAIHLNYLQEAIQPEGDLNAEKGLEVLEEVCRSVKVPVIAKETGAGISREVAVMLKRAGVSAIDVGGKGGTTFSGVEVYRVNDEVSKSVGIDFWDWGLPTAFSIVDCRGILPVIATGGLRSGLDVAKSIAIGAELGSAALPFLRAAVESAEKVREEIEYFRRGLKTAMFLTGCKNVEELKGLKVFVSGRLKEWIDFRG.

6–7 contributes to the substrate binding site; it reads RK. FMN is bound by residues 63 to 65, serine 93, and asparagine 122; that span reads SMT. 93–95 contributes to the substrate binding site; sequence SQR. Glutamine 156 is a substrate binding site. Glutamate 157 contributes to the Mg(2+) binding site. FMN contacts are provided by residues lysine 188, threonine 218, 265–267, and 286–287; these read GLR and AL.

Belongs to the IPP isomerase type 2 family. In terms of assembly, homooctamer. Dimer of tetramers. FMN is required as a cofactor. NADPH serves as cofactor. The cofactor is Mg(2+).

Its subcellular location is the cytoplasm. It carries out the reaction isopentenyl diphosphate = dimethylallyl diphosphate. In terms of biological role, involved in the biosynthesis of isoprenoids. Catalyzes the 1,3-allylic rearrangement of the homoallylic substrate isopentenyl (IPP) to its allylic isomer, dimethylallyl diphosphate (DMAPP). The protein is Isopentenyl-diphosphate delta-isomerase of Archaeoglobus fulgidus (strain ATCC 49558 / DSM 4304 / JCM 9628 / NBRC 100126 / VC-16).